We begin with the raw amino-acid sequence, 127 residues long: uncharacterized protein (127 aa).

In terms of domain architecture, HTH asnC-type spans 1–46; sequence MEVGLSPSACLRRIKLMEQAGVIRGYTALVDPTQSESTIAVIINIT.

Functionally, not known, symbiotically active. This is an uncharacterized protein from Sinorhizobium fredii (strain NBRC 101917 / NGR234).